We begin with the raw amino-acid sequence, 126 residues long: 13 kDa ribonucleoprotein-associated protein (126 aa).

The protein belongs to the eukaryotic ribosomal protein eL8 family. In terms of assembly, component of the U3 snoRNP particle. Binds to the C'/D and B/C motifs in U3 snoRNA. Component of the 25S U4/U6.U5 tri-snRNP particle, a subcomplex of the spliceosome. Binds to the 5' stem-loop of U4 snRNA.

It localises to the nucleus. It is found in the nucleolus. Functionally, common component of the spliceosome and rRNA processing machinery. In association with the spliceosomal U4/U6.U5 tri-snRNP particle, required for splicing of pre-mRNA. In association with box C/D snoRNPs, required for processing of pre-ribosomal RNA (rRNA) and site-specific 2'-O-methylation of substrate RNAs. Essential for the accumulation and stability of U4 snRNA, U6 snRNA, and box C/D snoRNAs. The polypeptide is 13 kDa ribonucleoprotein-associated protein (SNU13) (Candida albicans (strain SC5314 / ATCC MYA-2876) (Yeast)).